A 206-amino-acid polypeptide reads, in one-letter code: Large ribosomal subunit protein uL4 (206 aa).

Positions 63 to 97 (MYKQKGTGRARHHSARAPQFRGGGKAHGPVVRSHE) are disordered. Residues 64-77 (YKQKGTGRARHHSA) show a composition bias toward basic residues.

The protein belongs to the universal ribosomal protein uL4 family. In terms of assembly, part of the 50S ribosomal subunit.

One of the primary rRNA binding proteins, this protein initially binds near the 5'-end of the 23S rRNA. It is important during the early stages of 50S assembly. It makes multiple contacts with different domains of the 23S rRNA in the assembled 50S subunit and ribosome. Functionally, forms part of the polypeptide exit tunnel. In Rhizobium rhizogenes (strain K84 / ATCC BAA-868) (Agrobacterium radiobacter), this protein is Large ribosomal subunit protein uL4.